A 91-amino-acid chain; its full sequence is DNA-directed RNA polymerase subunit omega (91 aa).

It belongs to the RNA polymerase subunit omega family. In terms of assembly, the RNAP catalytic core consists of 2 alpha, 1 beta, 1 beta' and 1 omega subunit. When a sigma factor is associated with the core the holoenzyme is formed, which can initiate transcription.

The catalysed reaction is RNA(n) + a ribonucleoside 5'-triphosphate = RNA(n+1) + diphosphate. Functionally, promotes RNA polymerase assembly. Latches the N- and C-terminal regions of the beta' subunit thereby facilitating its interaction with the beta and alpha subunits. This Psychromonas ingrahamii (strain DSM 17664 / CCUG 51855 / 37) protein is DNA-directed RNA polymerase subunit omega.